A 507-amino-acid polypeptide reads, in one-letter code: MGCCQSSFLKPSSLHDKKITSDDLSGRRGKGAKRGNRHRHANINEGRGWHFSDVPDFSEFSASVLRDATNNFNKNAVVSVCSDQEPNLVYQGCIRSDKDKRLIAVKKFSKTTWPDPKQFATEARAIGSLRHVRLVNLIGYCCEGDERLLVSEYMPNESLTKHLFHWEKQTMEWAMRLRVALYVAEALEYCRQSGLKLYHDLNTCRVLFDENGSPRLSCFGWMKNSKDGKNFSTNLAYTPPEYLRSGTLIPESVVFSFGTFLLDLLSGKHIPPSHAVGTIQKQNLNVLMDSHLEGNYPEEDAAMVFDLASKCLHNNPNERPEIGDIISVITTLQQKLDVPSYTMLGISKLEKLEMEHPKSLIYDACHQMDLAALHQILEAMEYKEDEVTCELSFQQWAQQIKDVCNTRQQGDSAFRNKHFESAIDKYTQFIEIGIMISPTVYARRSMCYLFCDQPDAALRDAMQAQCVYSDWPTAFYLQAVALSKLNMVEDSATMLKEALILEDKRGS.

The N-myristoyl glycine moiety is linked to residue G2. Residues 16–26 (DKKITSDDLSG) are compositionally biased toward basic and acidic residues. The disordered stretch occupies residues 16–44 (DKKITSDDLSGRRGKGAKRGNRHRHANIN). The span at 27–41 (RRGKGAKRGNRHRHA) shows a compositional bias: basic residues. In terms of domain architecture, Protein kinase spans 75 to 332 (NAVVSVCSDQ…GDIISVITTL (258 aa)). ATP contacts are provided by residues 81–89 (CSDQEPNLV) and K106. D200 (proton acceptor) is an active-site residue.

The protein belongs to the protein kinase superfamily. Ser/Thr protein kinase family. Interacts with BRI1, ASK7/BIN2, BSK1, BSK6 and BSK8. Phosphorylated by BRI1, ASK7/BIN2 and ASK9/BIL2.

It localises to the cell membrane. It catalyses the reaction L-seryl-[protein] + ATP = O-phospho-L-seryl-[protein] + ADP + H(+). It carries out the reaction L-threonyl-[protein] + ATP = O-phospho-L-threonyl-[protein] + ADP + H(+). In terms of biological role, probable serine/threonine kinase that acts as a positive regulator of brassinosteroid (BR) signaling downstream of the receptor kinase BRI1. The sequence is that of Serine/threonine-protein kinase BSK11 from Arabidopsis thaliana (Mouse-ear cress).